The primary structure comprises 1151 residues: Zinc finger protein ZFPM2 (1151 aa).

The segment covering 1–13 (MSRRKQSKPRQIK) has biased composition (basic residues). The tract at residues 1–102 (MSRRKQSKPR…ETDDWDGPGE (102 aa)) is disordered. Composition is skewed to acidic residues over residues 18-33 (DAIEDEEEECPSEETD) and 70-82 (EGIQETAESDGDT). The segment at 244 to 277 (IVNKDIFPCKSCGIWYRSERNLQAHLMYYCSGRQ) adopts a CCHC FOG-type 1 zinc-finger fold. Residues Cys252, Cys255, His268, and Cys273 each coordinate Zn(2+). The C2H2-type 1 zinc-finger motif lies at 296-320 (SLCPFPQCTKSFSNARALEMHLNSH). Residue Lys324 forms a Glycyl lysine isopeptide (Lys-Gly) (interchain with G-Cter in SUMO1) linkage. 2 consecutive C2H2-type zinc fingers follow at residues 335–357 (LKCTVCSYTADSVINFHQHLFSH) and 363–385 (FRCNHCHFGFQTQRELLQHQELH). The interval 389 to 487 (GKLPRESDME…RLASSPVQPN (99 aa)) is disordered. Composition is skewed to polar residues over residues 401–410 (PSATEDSLQP) and 419–431 (ELPQSQKAMQTKD). Lys444 participates in a covalent cross-link: Glycyl lysine isopeptide (Lys-Gly) (interchain with G-Cter in SUMO2). Positions 447-485 (LFLTNQRPEIQPTTNKQSFSYTKIKSEPSSPRLASSPVQ) are enriched in polar residues. Residue Lys471 forms a Glycyl lysine isopeptide (Lys-Gly) (interchain with G-Cter in SUMO1) linkage. Ser532 is modified (phosphoserine). Residues 542-575 (PLMPKGATCFECNITFNNLDNYLVHKKHYCSSRW) form a CCHC FOG-type 2 zinc finger. Positions 550, 553, 566, and 571 each coordinate Zn(2+). Ser581 carries the phosphoserine modification. The interval 636–683 (GPNGKGHDKDFSTQTKKLSTSSNNDDKINGKPVDVKNPSVPLVDGESD) is disordered. Polar residues predominate over residues 647-658 (STQTKKLSTSSN). A CCHC FOG-type 3 zinc finger spans residues 681-714 (ESDPNKTTCEACNITFSRHETYMVHKQYYCATRH). Residues Cys689, Cys692, His705, and Cys710 each contribute to the Zn(2+) site. Positions 736-740 (RKRRK) match the Nuclear localization signal motif. The tract at residues 829–835 (PIDLSKK) is interaction with CTBP2. The CCHC FOG-type 4 zinc finger occupies 848–881 (KRLLDYHECTVCKISFNKVENYLAHKQNFCPVTA). Positions 856, 859, 872, and 877 each coordinate Zn(2+). A Phosphoserine modification is found at Ser904. Glycyl lysine isopeptide (Lys-Gly) (interchain with G-Cter in SUMO1) cross-links involve residues Lys915 and Lys955. The residue at position 1014 (Ser1014) is a Phosphoserine. Positions 1051–1095 (DERPAANPQQENISQNPQHEDDHKSPSWISENPLAANENVSPGIP) are disordered. Over residues 1057-1067 (NPQQENISQNP) the composition is skewed to polar residues. A CCHC FOG-type 5 zinc finger spans residues 1113–1146 (QAPTSGKYCRLCDIQFNNLSNFITHKKFYCSSHA). Residues Cys1121, Cys1124, His1137, and Cys1142 each coordinate Zn(2+).

This sequence belongs to the FOG (Friend of GATA) family. In terms of assembly, interacts with the N-terminal zinc-finger of GATA4, GATA5 and probably GATA6. Interacts with retinoid nuclear receptor RXRA when ligand bound. Interacts with corepressor CTBP2; this interaction is however not essential for corepressor activity. Able to bind GATA1 in vitro. Interacts with NR2F2 and NR2F6. Interacts with ATOH8; mediates indirect interaction with GATA4. In terms of processing, sumoylation reduces transcriptional repression activity. As to expression, widely expressed at low level.

The protein localises to the nucleus. Functionally, transcription regulator that plays a central role in heart morphogenesis and development of coronary vessels from epicardium, by regulating genes that are essential during cardiogenesis. Essential cofactor that acts via the formation of a heterodimer with transcription factors of the GATA family GATA4, GATA5 and GATA6. Such heterodimer can both activate or repress transcriptional activity, depending on the cell and promoter context. Also required in gonadal differentiation, possibly be regulating expression of SRY. Probably acts a corepressor of NR2F2. In Homo sapiens (Human), this protein is Zinc finger protein ZFPM2 (ZFPM2).